A 285-amino-acid chain; its full sequence is Foldase protein PrsA 2 (285 aa).

A signal peptide spans 1 to 20 (MRGKHIFIITALISILMLAA). Residue Cys-21 is the site of N-palmitoyl cysteine attachment. Cys-21 is lipidated: S-diacylglycerol cysteine. The region spanning 134 to 224 (KPEIKASHIL…NGYHIIKLTG (91 aa)) is the PpiC domain.

Belongs to the PrsA family.

Its subcellular location is the cell membrane. It catalyses the reaction [protein]-peptidylproline (omega=180) = [protein]-peptidylproline (omega=0). Plays a major role in protein secretion by helping the post-translocational extracellular folding of several secreted proteins. Important for the secretion of the protective antigen. The three PsrA proteins in this organism show different but overlapping substrate specificities. The chain is Foldase protein PrsA 2 (prsA2) from Bacillus anthracis.